The sequence spans 1005 residues: Helicase-like transcription factor (1005 aa).

At Arg27 the chain carries Omega-N-methylarginine. A DNA-binding region spans residues 38-287; that stretch reads EFQDIIPPDD…FSEKDQPENV (250 aa). A Glycyl lysine isopeptide (Lys-Gly) (interchain with G-Cter in SUMO2) cross-link involves residue Lys112. The residue at position 195 (Tyr195) is a Phosphotyrosine; by JAK2. A Glycyl lysine isopeptide (Lys-Gly) (interchain with G-Cter in SUMO2) cross-link involves residue Lys211. 294 to 301 contributes to the ATP binding site; the sequence is DDMGLGKT. Over residues 325–361 the composition is skewed to basic and acidic residues; that stretch reads KNQVKKECNSSESDKPGRKDTIKKTDGLSKEGSRYSE. The segment at 325–385 is disordered; the sequence is KNQVKKECNS…SELSSSQPKR (61 aa). The span at 373–382 shows a compositional bias: polar residues; that stretch reads YSMSELSSSQ. Phosphoserine is present on residues Ser395, Ser396, and Ser398. The Helicase ATP-binding domain occupies 427–603; the sequence is GPSKIKEDTA…WSLLSFLKLK (177 aa). Positions 554–557 match the DEGH box motif; sequence DEGH. Thr733 is modified (phosphothreonine). The RING-type zinc finger occupies 757 to 798; it reads CAICLDSLTVPVITHCAHVFCKPCICQCIQNEQPHAKCPLCR. Required for interaction with the RFBP isoform of ATP11B regions lie at residues 767 to 772 and 791 to 796; these read PVITHC and HAKCPL. The Helicase C-terminal domain occupies 834–999; that stretch reads ALMHALIDLR…EMKQAKINEI (166 aa). Residues 922–1005 form an interaction with SP1 and SP3 region; sequence SRVFLMDPAW…INEIRTLIDL (84 aa).

This sequence belongs to the SNF2/RAD54 helicase family. RAD16 subfamily. Interacts with SP1 and SP3 independently of DNA; the interaction with these transcriptional factors may be required for basal transcription of target genes. Interacts (via the RING-finger) with isoform RFBP of ATP11B. Progesterone-dependent isoform 1 interacts with EGR1; the interaction requires prior binding to DNA and represses c-Rel via a DNA looping mechanism. Interacts with GATA4. Interacts with PCNA; the interaction promotes polyubiquitination of PCNA through association with the UBE2B-RAD18 and UBE2V2-UBE2N ubiquitin ligase complexes. Interacts with RAD18, SHPRH, UBE2V2 and UBE2N. Phosphorylated on serine, threonine, and tyrosine residues. Tyr-195 phosphorylation is catalyzed by JAK2 in response to prolactin treatment. It is required for DNA binding. As to expression, isoform 1 is expressed preferentially in bladder, cervix, diaphragm, duodenum, epididymis, heart, kidney, liver, lung, ovary (granulosa cells), prostate, spleen, testis (predominantly in the Sertoli cells of the seminiferous tubules) and vagina. Isoform 2 is expressed preferentially in lactating mammary gland and uterine endometrium.

It localises to the cytoplasm. It is found in the nucleus. The protein resides in the nucleolus. The protein localises to the nucleoplasm. It carries out the reaction S-ubiquitinyl-[E2 ubiquitin-conjugating enzyme]-L-cysteine + [acceptor protein]-L-lysine = [E2 ubiquitin-conjugating enzyme]-L-cysteine + N(6)-ubiquitinyl-[acceptor protein]-L-lysine.. The protein operates within protein modification; protein ubiquitination. In terms of biological role, has both helicase and E3 ubiquitin ligase activities. Possesses intrinsic ATP-dependent nucleosome-remodeling activity. This activity may be required for transcriptional activation or repression of specific target promoters. These may include the SERPINE1, to which this protein can bind directly. Mediates repression by c-Rel through a DNA-looping mechanism. Plays a role in error-free postreplication repair (PRR) of damaged DNA and maintains genomic stability through acting as a ubiquitin ligase for 'Lys-63'-linked polyubiquitination of chromatin-bound PCNA. Transcriptional regulator that mediates the ability of prolactin to augment progesterone-dependent transcription of the SCGB1A1/uteroglobin gene through a bipartite progesterone receptor half-site/overlapping Y-box combination (-38/-26) where progesterone activation is attenuated by nuclear factor Y binding. Regulation also involves two GC-rich sequences in the proximal promoter (positions -162/+90) and a RUSH/SMARCA3 site (positions -616/-611) in the 5'-untranslated region. This is Helicase-like transcription factor (HLTF) from Oryctolagus cuniculus (Rabbit).